The primary structure comprises 243 residues: Putative outer membrane protein RP075 (243 aa).

Positions 1–23 (MLRIVKKLWVILFISNISINSFA) are cleaved as a signal peptide.

Belongs to the OmpW/AlkL family.

The protein localises to the cell outer membrane. The protein is Putative outer membrane protein RP075 of Rickettsia prowazekii (strain Madrid E).